Reading from the N-terminus, the 207-residue chain is Serotonin N-acetyltransferase (207 aa).

Thr31 carries the phosphothreonine; by PKA modification. Residues 35–196 (NEFRCLTPKD…TFTEMHCSLR (162 aa)) enclose the N-acetyltransferase domain. Position 124 (Leu124) interacts with substrate. Acetyl-CoA contacts are provided by residues 124–126 (LAV) and 132–137 (QQGKGS). Residue Met159 participates in substrate binding. Position 168–170 (168–170 (YQR)) interacts with acetyl-CoA. Position 205 is a phosphoserine (Ser205).

Belongs to the acetyltransferase family. AANAT subfamily. Monomer. Interacts with several 14-3-3 proteins, including YWHAB, YWHAE, YWHAG and YWHAZ, preferentially when phosphorylated at Thr-31. Phosphorylation on Ser-205 also allows binding to YWHAZ, but with lower affinity. The interaction with YWHAZ considerably increases affinity for arylalkylamines and acetyl-CoA and protects the enzyme from dephosphorylation and proteasomal degradation. It may also prevent thiol-dependent inactivation. In terms of processing, cAMP-dependent phosphorylation on both N-terminal Thr-31 and C-terminal Ser-205 regulates AANAT activity by promoting interaction with 14-3-3 proteins. In terms of tissue distribution, high levels in pineal gland and retina.

The protein localises to the cytoplasm. The catalysed reaction is a 2-arylethylamine + acetyl-CoA = an N-acetyl-2-arylethylamine + CoA + H(+). The protein operates within aromatic compound metabolism; melatonin biosynthesis; melatonin from serotonin: step 1/2. Controls the night/day rhythm of melatonin production in the pineal gland. Catalyzes the N-acetylation of serotonin into N-acetylserotonin, the penultimate step in the synthesis of melatonin. This chain is Serotonin N-acetyltransferase (AANAT), found in Bos taurus (Bovine).